The chain runs to 130 residues: Small ribosomal subunit protein uS9 (130 aa).

This sequence belongs to the universal ribosomal protein uS9 family.

The protein is Small ribosomal subunit protein uS9 of Pseudomonas paraeruginosa (strain DSM 24068 / PA7) (Pseudomonas aeruginosa (strain PA7)).